The following is a 278-amino-acid chain: Bis(5'-nucleosyl)-tetraphosphatase, symmetrical (278 aa).

Belongs to the Ap4A hydrolase family.

The catalysed reaction is P(1),P(4)-bis(5'-adenosyl) tetraphosphate + H2O = 2 ADP + 2 H(+). Its function is as follows. Hydrolyzes diadenosine 5',5'''-P1,P4-tetraphosphate to yield ADP. The sequence is that of Bis(5'-nucleosyl)-tetraphosphatase, symmetrical from Nitrosococcus oceani (strain ATCC 19707 / BCRC 17464 / JCM 30415 / NCIMB 11848 / C-107).